We begin with the raw amino-acid sequence, 366 residues long: Molybdopterin synthase catalytic subunit (366 aa).

Substrate-binding positions include 101-102 (HR), lysine 117, and 124-126 (KKE).

It belongs to the MoaE family. MOCS2B subfamily. Heterotetramer; composed of 2 small (Mocs2A) and 2 large (Mocs2B) subunits.

Its subcellular location is the cytoplasm. The catalysed reaction is 2 [molybdopterin-synthase sulfur-carrier protein]-C-terminal-Gly-aminoethanethioate + cyclic pyranopterin phosphate + H2O = molybdopterin + 2 [molybdopterin-synthase sulfur-carrier protein]-C-terminal Gly-Gly + 2 H(+). Its pathway is cofactor biosynthesis; molybdopterin biosynthesis. Its function is as follows. Catalytic subunit of the molybdopterin synthase complex, a complex that catalyzes the conversion of precursor Z into molybdopterin. Acts by mediating the incorporation of 2 sulfur atoms from thiocarboxylated Mocs2A into precursor Z to generate a dithiolene group. The chain is Molybdopterin synthase catalytic subunit from Drosophila mojavensis (Fruit fly).